A 210-amino-acid chain; its full sequence is T-cell surface glycoprotein CD8 beta-2 chain (210 aa).

The signal sequence occupies residues 1-18; the sequence is MRPRLWLLLAAQLTVLHG. The region spanning 19–132 is the Ig-like V-type domain; it reads NSVLQQTPAY…ELTFGKGTQL (114 aa). At 19 to 170 the chain is on the extracellular side; that stretch reads NSVLQQTPAY…ETQKGPLCSP (152 aa). Cysteines 41 and 116 form a disulfide. N102 carries N-linked (GlcNAc...) asparagine glycosylation. Residues 171-191 form a helical membrane-spanning segment; it reads VTLGLLVAGVLVLLVSLGVAM. At 192–210 the chain is on the cytoplasmic side; the sequence is HLCCRRRRARLRFMKQFYK.

As to quaternary structure, in general heterodimer of an alpha and a beta chain linked by two disulfide bonds.

It is found in the cell membrane. Its function is as follows. Identifies cytotoxic/suppressor T-cells that interact with MHC class I bearing targets. CD8 is thought to play a role in the process of T-cell mediated killing. This is T-cell surface glycoprotein CD8 beta-2 chain from Homo sapiens (Human).